Here is a 347-residue protein sequence, read N- to C-terminus: Ribosomal RNA large subunit methyltransferase M (347 aa).

Residues Ser-184, 217-220 (APGG), Asp-236, Asp-256, and Asp-272 each bind S-adenosyl-L-methionine. Residue Lys-301 is the Proton acceptor of the active site.

This sequence belongs to the class I-like SAM-binding methyltransferase superfamily. RNA methyltransferase RlmE family. RlmM subfamily. As to quaternary structure, monomer.

The protein localises to the cytoplasm. It catalyses the reaction cytidine(2498) in 23S rRNA + S-adenosyl-L-methionine = 2'-O-methylcytidine(2498) in 23S rRNA + S-adenosyl-L-homocysteine + H(+). Functionally, catalyzes the 2'-O-methylation at nucleotide C2498 in 23S rRNA. This is Ribosomal RNA large subunit methyltransferase M from Xanthomonas oryzae pv. oryzae (strain MAFF 311018).